A 258-amino-acid chain; its full sequence is uncharacterized protein (258 aa).

4 consecutive transmembrane segments (helical) span residues 33–53 (LFVI…VTTN), 59–79 (FDSW…IFVF), 88–108 (LLYL…FSFF), and 140–160 (IIAL…WLIQ). The interval 237–258 (NNKINSELQPPSILNKNSKPIE) is disordered. The segment covering 242–258 (SELQPPSILNKNSKPIE) has biased composition (polar residues).

It localises to the membrane. This is an uncharacterized protein from Dictyostelium discoideum (Social amoeba).